The chain runs to 367 residues: Flagellar P-ring protein (367 aa).

The signal sequence occupies residues 1-22; sequence MRRMLVIRWILAIHLIATQVFA.

The protein belongs to the FlgI family. The basal body constitutes a major portion of the flagellar organelle and consists of four rings (L,P,S, and M) mounted on a central rod.

It is found in the periplasm. The protein resides in the bacterial flagellum basal body. In terms of biological role, assembles around the rod to form the L-ring and probably protects the motor/basal body from shearing forces during rotation. The chain is Flagellar P-ring protein from Legionella pneumophila (strain Lens).